Reading from the N-terminus, the 330-residue chain is Glycerol-3-phosphate dehydrogenase [NAD(P)+] (330 aa).

Residues serine 10, tryptophan 11, arginine 31, and lysine 105 each coordinate NADPH. 3 residues coordinate sn-glycerol 3-phosphate: lysine 105, glycine 135, and serine 137. Residue alanine 139 participates in NADPH binding. Sn-glycerol 3-phosphate contacts are provided by lysine 190, aspartate 243, serine 253, arginine 254, and asparagine 255. The active-site Proton acceptor is the lysine 190. Arginine 254 is an NADPH binding site. NADPH contacts are provided by valine 278 and glutamate 280.

The protein belongs to the NAD-dependent glycerol-3-phosphate dehydrogenase family.

It localises to the cytoplasm. It catalyses the reaction sn-glycerol 3-phosphate + NAD(+) = dihydroxyacetone phosphate + NADH + H(+). The catalysed reaction is sn-glycerol 3-phosphate + NADP(+) = dihydroxyacetone phosphate + NADPH + H(+). It participates in membrane lipid metabolism; glycerophospholipid metabolism. Catalyzes the reduction of the glycolytic intermediate dihydroxyacetone phosphate (DHAP) to sn-glycerol 3-phosphate (G3P), the key precursor for phospholipid synthesis. This chain is Glycerol-3-phosphate dehydrogenase [NAD(P)+], found in Solidesulfovibrio magneticus (strain ATCC 700980 / DSM 13731 / RS-1) (Desulfovibrio magneticus).